We begin with the raw amino-acid sequence, 395 residues long: Neuromedin-U receptor 2 (395 aa).

Topologically, residues methionine 1–serine 41 are extracellular. 2 N-linked (GlcNAc...) asparagine glycosylation sites follow: asparagine 6 and asparagine 19. A helical membrane pass occupies residues valine 42–isoleucine 62. Residues alanine 63 to tyrosine 74 are Cytoplasmic-facing. The chain crosses the membrane as a helical span at residues tyrosine 75–valine 95. At tyrosine 96–threonine 115 the chain is on the extracellular side. Cysteine 111 and cysteine 196 are oxidised to a cystine. Residues alanine 116 to valine 138 traverse the membrane as a helical segment. Topologically, residues alanine 139–arginine 157 are cytoplasmic. Residues isoleucine 158–glycine 178 traverse the membrane as a helical segment. The Extracellular portion of the chain corresponds to isoleucine 179–threonine 212. Residue asparagine 186 is glycosylated (N-linked (GlcNAc...) asparagine). A helical membrane pass occupies residues serine 213–leucine 233. Over arginine 234–serine 257 the chain is Cytoplasmic. Residues valine 258–valine 278 traverse the membrane as a helical segment. Topologically, residues aspartate 279–leucine 293 are extracellular. The helical transmembrane segment at alanine 294–valine 314 threads the bilayer. Residues asparagine 315–proline 395 lie on the Cytoplasmic side of the membrane.

Belongs to the G-protein coupled receptor 1 family. Expressed primarily in brain tissues, more specifically in medulla and spinal cord. Widespread distribution in peripheral tissues.

It is found in the cell membrane. In terms of biological role, receptor for the neuromedin-U and neuromedin-S neuropeptides. The polypeptide is Neuromedin-U receptor 2 (Nmur2) (Mus musculus (Mouse)).